A 187-amino-acid polypeptide reads, in one-letter code: Small ribosomal subunit protein uS7 (187 aa).

Belongs to the universal ribosomal protein uS7 family. In terms of assembly, part of the 30S ribosomal subunit.

One of the primary rRNA binding proteins, it binds directly to 16S rRNA where it nucleates assembly of the head domain of the 30S subunit. Is located at the subunit interface close to the decoding center. This chain is Small ribosomal subunit protein uS7, found in Picrophilus torridus (strain ATCC 700027 / DSM 9790 / JCM 10055 / NBRC 100828 / KAW 2/3).